Consider the following 73-residue polypeptide: Excelsatoxin A (73 aa).

Residues 1–20 (MRFALVAAITIALLVAGSVA) form the signal peptide. A propeptide spanning residues 21 to 37 (DESSEDIDNIVIKTPLD) is cleaved from the precursor. 3 cysteine pairs are disulfide-bonded: C41/C58, C46/C60, and C54/C69.

This sequence belongs to the gympietide family. Expressed in trichomes, that are stiff epidermal hairs located on the surface of petioles and leaves. Not expressed in other aerial parts.

It is found in the secreted. Functionally, neurotoxin certainly responsible for the defensive, persistent, and painful stings of the giant stinging tree. Inhibits inactivation of Nav1.7/SCN9A sodium channel in sensory neurons by directly interacting with TMEM233, a newly described Nav-interacting protein. Has virtually no effect on Nav1.7/SCN9A function in heterologous expression systems and in neurons that do not express TMEM233. Also weakly but significantly affects Nav1.8/SCN10A. Coexpression of TMEM233 with Nav also confers ExTxA sensitivity to Nav1.1-Nav1.6. On the Nav1.7/SCN9A channel, causes a significant hyperpolarizing shift in the voltage dependence of activation. Its effects on Nav currents are irreversible, with no apparent reduction in activity even after repeated wash steps over 30 minutes. Does not show activity on Nav1.9/SCN11A. Does not show insecticidal activities. In vivo, induces nocifensive behavior in mice (licking or biting and shaking or lifting of the affected paw) lasting for approximately 1 hour. The protein is Excelsatoxin A of Dendrocnide excelsa (Giant stinging tree).